The primary structure comprises 52 residues: Movement protein TGBp3 (52 aa).

Residues 1-3 (MHE) are Lumenal-facing. The chain crosses the membrane as a helical span at residues 4 to 21 (SHLVVILALLLLALWCLS). Residues 22-52 (TRPVQPSCHVEINGHSIIVTGNCWHSTQRPH) are Cytoplasmic-facing.

The protein belongs to the Tymovirales TGBp3 protein family.

It localises to the host endoplasmic reticulum membrane. In terms of biological role, plays a role in viral cell-to-cell propagation, by facilitating genome transport to neighboring plant cells through plasmosdesmata. May induce the formation of granular vesicles derived from the Endoplasmic reticulum, which align on actin filaments. This Foxtail mosaic virus protein is Movement protein TGBp3.